Reading from the N-terminus, the 431-residue chain is Glutamate-1-semialdehyde 2,1-aminomutase (431 aa).

K269 is modified (N6-(pyridoxal phosphate)lysine).

This sequence belongs to the class-III pyridoxal-phosphate-dependent aminotransferase family. HemL subfamily. As to quaternary structure, homodimer. The cofactor is pyridoxal 5'-phosphate.

The protein resides in the cytoplasm. It catalyses the reaction (S)-4-amino-5-oxopentanoate = 5-aminolevulinate. It participates in porphyrin-containing compound metabolism; protoporphyrin-IX biosynthesis; 5-aminolevulinate from L-glutamyl-tRNA(Glu): step 2/2. Its pathway is porphyrin-containing compound metabolism; chlorophyll biosynthesis. The chain is Glutamate-1-semialdehyde 2,1-aminomutase from Chlorobium phaeobacteroides (strain BS1).